The chain runs to 351 residues: Photosystem II D2 protein (351 aa).

Residues 39–59 traverse the membrane as a helical segment; it reads TAYLAIGGWLTGTTFVTSWYT. H116 is a binding site for chlorophyll a. A helical transmembrane segment spans residues 123–139; the sequence is GFMLRQFEIARLVGIRP. Residues Q128 and N141 each coordinate pheophytin a. Residues 151 to 164 traverse the membrane as a helical segment; sequence VFVSVFLMYPLGQS. Position 196 (H196) interacts with chlorophyll a. Residues 206–226 traverse the membrane as a helical segment; it reads GALLCAIHGATVENTLFEDGE. The a plastoquinone site is built by H213 and F260. H213 lines the Fe cation pocket. H267 contributes to the Fe cation binding site. A helical membrane pass occupies residues 277–293; the sequence is GLWTSSIGIIGLALNLR.

The protein belongs to the reaction center PufL/M/PsbA/D family. In terms of assembly, PSII is composed of 1 copy each of membrane proteins PsbA, PsbB, PsbC, PsbD, PsbE, PsbF, PsbH, PsbI, PsbJ, PsbK, PsbL, PsbM, PsbT, PsbX, PsbY, PsbZ, Psb30/Ycf12, peripheral proteins PsbO, CyanoQ (PsbQ), PsbU, PsbV and a large number of cofactors. It forms dimeric complexes. The D1/D2 heterodimer binds P680, chlorophylls that are the primary electron donor of PSII, and subsequent electron acceptors. It shares a non-heme iron and each subunit binds pheophytin, quinone, additional chlorophylls, carotenoids and lipids. There is also a Cl(-1) ion associated with D1 and D2, which is required for oxygen evolution. The PSII complex binds additional chlorophylls, carotenoids and specific lipids. is required as a cofactor.

Its subcellular location is the cellular thylakoid membrane. It catalyses the reaction 2 a plastoquinone + 4 hnu + 2 H2O = 2 a plastoquinol + O2. In terms of biological role, photosystem II (PSII) is a light-driven water:plastoquinone oxidoreductase that uses light energy to abstract electrons from H(2)O, generating O(2) and a proton gradient subsequently used for ATP formation. It consists of a core antenna complex that captures photons, and an electron transfer chain that converts photonic excitation into a charge separation. The D1/D2 (PsbA/PsbD) reaction center heterodimer binds P680, the primary electron donor of PSII as well as several subsequent electron acceptors. D2 is needed for assembly of a stable PSII complex. This chain is Photosystem II D2 protein, found in Parasynechococcus marenigrum (strain WH8102).